We begin with the raw amino-acid sequence, 117 residues long: Large ribosomal subunit protein bL19 (117 aa).

Belongs to the bacterial ribosomal protein bL19 family.

In terms of biological role, this protein is located at the 30S-50S ribosomal subunit interface and may play a role in the structure and function of the aminoacyl-tRNA binding site. The protein is Large ribosomal subunit protein bL19 of Vibrio campbellii (strain ATCC BAA-1116).